The following is a 324-amino-acid chain: Phospho-N-acetylmuramoyl-pentapeptide-transferase (324 aa).

10 helical membrane passes run 5–25 (VILFTILMGFLISVLLSPILI), 50–70 (GTPTMGGVMIILSIIVTTIVM), 77–97 (ISPEMVLLLFVTLGYGLLGFL), 117–137 (LIGQIIIAVVFYAVYHYYNFA), 147–167 (LSFDLGWAYFILVLFMLVGGS), 176–196 (LDGLLSGTAAIAFGAFAILAW), 203–223 (VAIFSVAVVGAVLGFLVFNAH), 227–247 (VFMGDTGSLALGGAIVTIAIL), 250–270 (LEILLVIIGGVFVIETLSVIL), and 302–322 (VVVTFWAAGLLLAVLGIYIEV).

Belongs to the glycosyltransferase 4 family. MraY subfamily. Requires Mg(2+) as cofactor.

It is found in the cell membrane. It carries out the reaction UDP-N-acetyl-alpha-D-muramoyl-L-alanyl-gamma-D-glutamyl-meso-2,6-diaminopimeloyl-D-alanyl-D-alanine + di-trans,octa-cis-undecaprenyl phosphate = di-trans,octa-cis-undecaprenyl diphospho-N-acetyl-alpha-D-muramoyl-L-alanyl-D-glutamyl-meso-2,6-diaminopimeloyl-D-alanyl-D-alanine + UMP. It functions in the pathway cell wall biogenesis; peptidoglycan biosynthesis. Catalyzes the initial step of the lipid cycle reactions in the biosynthesis of the cell wall peptidoglycan: transfers peptidoglycan precursor phospho-MurNAc-pentapeptide from UDP-MurNAc-pentapeptide onto the lipid carrier undecaprenyl phosphate, yielding undecaprenyl-pyrophosphoryl-MurNAc-pentapeptide, known as lipid I. The sequence is that of Phospho-N-acetylmuramoyl-pentapeptide-transferase from Bacillus subtilis (strain 168).